The primary structure comprises 269 residues: MHGLDDAQYLQQKAHNKRISEFRSSSNSGINVTVVLKYTNGVVQVYNWQGTEVIAGSLNRQLMKFPNYMNPDKHGRIEWPGEGVEHQHGLIRSNGGNGSYDIGAGDPYAMQFIVQGSVDWNATRLRFFGPDGSRWMPDDQGGASVRAGLLNAAEDIINSKMQPLYFCDRMAGKSYYVRFDDKYAPRFPTIGFEVYRYRVGATNEMGGESARTAVASLISFPTFSTAYVNEKVAVENFFQPRELVYQTAMGTPFEVRLVPMDRFVTETGI.

Major component of the virus occlusion bodies, which are large proteinaceous structures (polyhedra), that protect the virus from the outside environment for extended periods until they are ingested by insect larvae. The protein is Polyhedrin of Euxoa scandens cypovirus (EsCPV).